The chain runs to 1192 residues: Pyruvate carboxylase (1192 aa).

Residues 1–23 are disordered; sequence MAAPRQPEEAVDDTEFIDDHHDQ. The Biotin carboxylation domain maps to 40–492; the sequence is QFQKILVANR…WTTFIDDTPE (453 aa). ATP-binding residues include Lys-158, Glu-242, and His-277. The ATP-grasp domain occupies 162–359; it reads RQLAIRCDVP…IVAAQIQIAA (198 aa). Residue Arg-334 is part of the active site. The 269-residue stretch at 578 to 846 folds into the Pyruvate carboxyltransferase domain; the sequence is CLIMDTTWRD…DPGLNSAQVR (269 aa). Substrate is bound by residues 586-590 and Arg-659; that span reads RDAHQ. Asp-587 lines the a divalent metal cation pocket. Positions 755, 785, and 787 each coordinate a divalent metal cation. Residue Lys-755 is modified to N6-carboxylysine. Residue Thr-920 participates in substrate binding. A Biotinyl-binding domain is found at 1115-1190; the sequence is KAELGDSSQV…DGQDLVCKIV (76 aa). An N6-biotinyllysine modification is found at Lys-1156.

It depends on biotin as a cofactor. Zn(2+) is required as a cofactor.

It localises to the cytoplasm. It carries out the reaction hydrogencarbonate + pyruvate + ATP = oxaloacetate + ADP + phosphate + H(+). It participates in carbohydrate biosynthesis; gluconeogenesis. Pyruvate carboxylase catalyzes a 2-step reaction, involving the ATP-dependent carboxylation of the covalently attached biotin in the first step and the transfer of the carboxyl group to pyruvate in the second. This Aspergillus niger protein is Pyruvate carboxylase (pyc).